The following is a 229-amino-acid chain: Leucyl/phenylalanyl-tRNA--protein transferase (229 aa).

Belongs to the L/F-transferase family.

It is found in the cytoplasm. It carries out the reaction N-terminal L-lysyl-[protein] + L-leucyl-tRNA(Leu) = N-terminal L-leucyl-L-lysyl-[protein] + tRNA(Leu) + H(+). The catalysed reaction is N-terminal L-arginyl-[protein] + L-leucyl-tRNA(Leu) = N-terminal L-leucyl-L-arginyl-[protein] + tRNA(Leu) + H(+). The enzyme catalyses L-phenylalanyl-tRNA(Phe) + an N-terminal L-alpha-aminoacyl-[protein] = an N-terminal L-phenylalanyl-L-alpha-aminoacyl-[protein] + tRNA(Phe). Its function is as follows. Functions in the N-end rule pathway of protein degradation where it conjugates Leu, Phe and, less efficiently, Met from aminoacyl-tRNAs to the N-termini of proteins containing an N-terminal arginine or lysine. The sequence is that of Leucyl/phenylalanyl-tRNA--protein transferase from Pseudomonas syringae pv. tomato (strain ATCC BAA-871 / DC3000).